Reading from the N-terminus, the 468-residue chain is Zinc finger protein 672 (468 aa).

C2H2-type zinc fingers lie at residues 15-37 (YSCSVCGKSFQYSAVLLRHERAH), 43-65 (FRCLECGERCARASDLRVHRWTH), 71-93 (YICSECGQSFSHSSLLDLHLGTH), and 100-123 (CPCRLCGRRFPHVSALLLHRVRQH). The C2H2-type 5; degenerate zinc-finger motif lies at 129 to 151 (HRCPLCARSFRQSALPFHLARAH). 9 consecutive C2H2-type zinc fingers follow at residues 167–189 (YHCTQCPRAFHSSAGLRNHSRIH), 202–224 (HRCGVCGKSFSKSSTLTRHLQRH), 230–252 (FKCPECGKGFLESATLVRHQRTH), 258–280 (YACNDCGRCFSESSTLLRHQRSH), 286–308 (HICATCGKGFGQRYDLVVHQRSH), 314–336 (FPCPECGRGFTDRSDLTKHLRTH), 342–364 (YHCELCGKRFTCISNLNVHLRNH), 370–392 (HKCPECGKSFSVASKLALHRKTH), and 398–420 (AECTECGKFFSHGRSLSQHQRSH).

This sequence belongs to the krueppel C2H2-type zinc-finger protein family.

It localises to the nucleus. Its function is as follows. May be involved in transcriptional regulation. The polypeptide is Zinc finger protein 672 (Znf672) (Rattus norvegicus (Rat)).